A 172-amino-acid polypeptide reads, in one-letter code: Cytidylate kinase (172 aa).

Residue 7–15 participates in ATP binding; the sequence is GPPGSGTST.

The protein belongs to the cytidylate kinase family. Type 2 subfamily.

The protein resides in the cytoplasm. The catalysed reaction is CMP + ATP = CDP + ADP. It catalyses the reaction dCMP + ATP = dCDP + ADP. This Methanothrix thermoacetophila (strain DSM 6194 / JCM 14653 / NBRC 101360 / PT) (Methanosaeta thermophila) protein is Cytidylate kinase.